The primary structure comprises 102 residues: Scorpine-like-2 (102 aa).

A signal peptide spans 1-19 (MQTQCTVLQLLVLVALCSC). The region spanning 63-102 (QQLCLIVDTVQWCNKSCLAAENKEGYCHGTKCKCGIKVSY) is the BetaSPN-type CS-alpha/beta domain. Disulfide bonds link Cys-66/Cys-89, Cys-75/Cys-94, and Cys-79/Cys-96.

Belongs to the long chain scorpion toxin family. Class 3 subfamily. As to expression, expressed by the venom gland.

Its subcellular location is the secreted. Inhibits voltage-gated potassium channels. The sequence is that of Scorpine-like-2 from Urodacus yaschenkoi (Inland robust scorpion).